Here is an 81-residue protein sequence, read N- to C-terminus: ATP synthase subunit c, chloroplastic (81 aa).

2 helical membrane-spanning segments follow: residues 3-23 and 57-77; these read PIIS…ASIG and LAFM…LLFA.

The protein belongs to the ATPase C chain family. In terms of assembly, F-type ATPases have 2 components, F(1) - the catalytic core - and F(0) - the membrane proton channel. F(1) has five subunits: alpha(3), beta(3), gamma(1), delta(1), epsilon(1). F(0) has four main subunits: a(1), b(1), b'(1) and c(10-14). The alpha and beta chains form an alternating ring which encloses part of the gamma chain. F(1) is attached to F(0) by a central stalk formed by the gamma and epsilon chains, while a peripheral stalk is formed by the delta, b and b' chains.

Its subcellular location is the plastid. The protein localises to the chloroplast thylakoid membrane. Functionally, f(1)F(0) ATP synthase produces ATP from ADP in the presence of a proton or sodium gradient. F-type ATPases consist of two structural domains, F(1) containing the extramembraneous catalytic core and F(0) containing the membrane proton channel, linked together by a central stalk and a peripheral stalk. During catalysis, ATP synthesis in the catalytic domain of F(1) is coupled via a rotary mechanism of the central stalk subunits to proton translocation. In terms of biological role, key component of the F(0) channel; it plays a direct role in translocation across the membrane. A homomeric c-ring of between 10-14 subunits forms the central stalk rotor element with the F(1) delta and epsilon subunits. The sequence is that of ATP synthase subunit c, chloroplastic from Welwitschia mirabilis (Tree tumbo).